A 118-amino-acid chain; its full sequence is Autophagy-related protein 8 (118 aa).

Glycine 116 carries Phosphatidylethanolamine amidated glycine lipidation. Positions 117-118 (SI) are cleaved as a propeptide — removed in mature form.

This sequence belongs to the ATG8 family. Conjugation to phosphatidylethanolamine (PE) leads to homodimerization. Interacts with ATG1, ATG3, ATG4, ATG7 and ATG12. In terms of processing, the C-terminal Ser-117 and Ile-118 residues of ATG8 are removed by ATG4 to expose Gly-116 at the C-terminus. This Gly-116 forms then a thioester bond with ATG7 (E1-like activating enzyme) before being transferred to ATG3 (the specific E2 conjugating enzyme), in order to be finally amidated with phosphatidylethanolamine. This lipid modification anchors ATG8 to membranes and can be reversed by ATG4, releasing soluble ATG8.

It is found in the cytoplasmic vesicle. The protein resides in the cvt vesicle membrane. Its subcellular location is the autophagosome membrane. The protein localises to the vacuole membrane. Its function is as follows. Ubiquitin-like modifier involved in cytoplasm to vacuole transport (Cvt) vesicles and autophagosome formation. With ATG4, mediates the delivery of the vesicles and autophagosomes to the vacuole via the microtubule cytoskeleton. Required for selective autophagic degradation of the nucleus (nucleophagy) as well as for mitophagy which contributes to regulate mitochondrial quantity and quality by eliminating the mitochondria to a basal level to fulfill cellular energy requirements and preventing excess ROS production. Also participates in membrane fusion events that take place in the early secretory pathway. Also involved in endoplasmic reticulum-specific autophagic process and is essential for the survival of cells subjected to severe ER stress. The ATG8-PE conjugate mediates tethering between adjacent membranes and stimulates membrane hemifusion, leading to expansion of the autophagosomal membrane during autophagy. Moreover not only conjugation, but also subsequent ATG8-PE deconjugation is an important step required to facilitate multiple events during macroautophagy, and especially for efficient autophagosome biogenesis, the assembly of ATG9-containing tubulovesicular clusters into phagophores/autophagosomes, and for the disassembly of PAS-associated ATG components. Contributes to conidiation by regulating the conidial levels of the conidiation-related protein CP15 and mediates fungal oxidation resistance by controlling total superoxide dismutase (SOD) activity. This chain is Autophagy-related protein 8, found in Beauveria bassiana (strain ARSEF 2860) (White muscardine disease fungus).